The primary structure comprises 181 residues: Acireductone dioxygenase 2 (181 aa).

The Fe(2+) site is built by histidine 97, histidine 99, glutamate 103, and histidine 141. Histidine 97, histidine 99, glutamate 103, and histidine 141 together coordinate Ni(2+).

The protein belongs to the acireductone dioxygenase (ARD) family. As to quaternary structure, monomer. Fe(2+) is required as a cofactor. Ni(2+) serves as cofactor.

It catalyses the reaction 1,2-dihydroxy-5-(methylsulfanyl)pent-1-en-3-one + O2 = 3-(methylsulfanyl)propanoate + CO + formate + 2 H(+). The enzyme catalyses 1,2-dihydroxy-5-(methylsulfanyl)pent-1-en-3-one + O2 = 4-methylsulfanyl-2-oxobutanoate + formate + 2 H(+). It participates in amino-acid biosynthesis; L-methionine biosynthesis via salvage pathway; L-methionine from S-methyl-5-thio-alpha-D-ribose 1-phosphate: step 5/6. Functionally, catalyzes 2 different reactions between oxygen and the acireductone 1,2-dihydroxy-3-keto-5-methylthiopentene (DHK-MTPene) depending upon the metal bound in the active site. Fe-containing acireductone dioxygenase (Fe-ARD) produces formate and 2-keto-4-methylthiobutyrate (KMTB), the alpha-ketoacid precursor of methionine in the methionine recycle pathway. Ni-containing acireductone dioxygenase (Ni-ARD) produces methylthiopropionate, carbon monoxide and formate, and does not lie on the methionine recycle pathway. The polypeptide is Acireductone dioxygenase 2 (Pectobacterium atrosepticum (strain SCRI 1043 / ATCC BAA-672) (Erwinia carotovora subsp. atroseptica)).